The following is a 69-amino-acid chain: AVDFDKQCVPTADPGPCKGFMPMWWYNIFTSQCEEFIYGGCQGNDNRYRTKEECDKTCAEASATWDVNA.

Positions 8-58 (CVPTADPGPCKGFMPMWWYNIFTSQCEEFIYGGCQGNDNRYRTKEECDKTC) constitute a BPTI/Kunitz inhibitor domain. Disulfide bonds link cysteine 8-cysteine 58, cysteine 17-cysteine 41, and cysteine 33-cysteine 54.

It localises to the secreted. Serine protease inhibitor. The polypeptide is Protease inhibitor carrapatin (Rhipicephalus microplus (Cattle tick)).